The chain runs to 277 residues: NH(3)-dependent NAD(+) synthetase (277 aa).

Residue 36–43 coordinates ATP; the sequence is GLSGGIDS. A Mg(2+)-binding site is contributed by Asp42. Arg118 contributes to the deamido-NAD(+) binding site. Residue Thr138 participates in ATP binding. Glu143 serves as a coordination point for Mg(2+). ATP contacts are provided by Lys167 and Ser189.

Belongs to the NAD synthetase family. Homodimer.

It catalyses the reaction deamido-NAD(+) + NH4(+) + ATP = AMP + diphosphate + NAD(+) + H(+). It functions in the pathway cofactor biosynthesis; NAD(+) biosynthesis; NAD(+) from deamido-NAD(+) (ammonia route): step 1/1. Its function is as follows. Catalyzes the ATP-dependent amidation of deamido-NAD to form NAD. Uses ammonia as a nitrogen source. This Chlorobium phaeovibrioides (strain DSM 265 / 1930) (Prosthecochloris vibrioformis (strain DSM 265)) protein is NH(3)-dependent NAD(+) synthetase.